The sequence spans 451 residues: Tubulin alpha-2 chain (451 aa).

Residue Gln11 coordinates GTP. Lys40 bears the N6-acetyllysine mark. The GTP site is built by Glu71, Gly144, Thr145, Thr179, Asn206, and Asn228. Glu71 lines the Mg(2+) pocket. The active site involves Glu254.

The protein belongs to the tubulin family. As to quaternary structure, dimer of alpha and beta chains. A typical microtubule is a hollow water-filled tube with an outer diameter of 25 nm and an inner diameter of 15 nM. Alpha-beta heterodimers associate head-to-tail to form protofilaments running lengthwise along the microtubule wall with the beta-tubulin subunit facing the microtubule plus end conferring a structural polarity. Microtubules usually have 13 protofilaments but different protofilament numbers can be found in some organisms and specialized cells. The cofactor is Mg(2+). Post-translationally, undergoes a tyrosination/detyrosination cycle, the cyclic removal and re-addition of a C-terminal tyrosine residue by the enzymes tubulin tyrosine carboxypeptidase (TTCP) and tubulin tyrosine ligase (TTL), respectively. Acetylation of alpha chains at Lys-40 stabilizes microtubules and affects affinity and processivity of microtubule motors. This modification has a role in multiple cellular functions, ranging from cell motility, cell cycle progression or cell differentiation to intracellular trafficking and signaling.

It is found in the cytoplasm. It localises to the cytoskeleton. It catalyses the reaction GTP + H2O = GDP + phosphate + H(+). Tubulin is the major constituent of microtubules, a cylinder consisting of laterally associated linear protofilaments composed of alpha- and beta-tubulin heterodimers. Microtubules grow by the addition of GTP-tubulin dimers to the microtubule end, where a stabilizing cap forms. Below the cap, tubulin dimers are in GDP-bound state, owing to GTPase activity of alpha-tubulin. This chain is Tubulin alpha-2 chain (TUBA2), found in Zea mays (Maize).